A 303-amino-acid polypeptide reads, in one-letter code: E3 ubiquitin-protein ligase CHIP (303 aa).

A compositionally biased stretch (basic and acidic residues) spans Met-1–Gly-10. The disordered stretch occupies residues Met-1–Lys-30. A Glycyl lysine isopeptide (Lys-Gly) (interchain with G-Cter in ubiquitin) cross-link involves residue Lys-2. Position 19 is a phosphoserine (Ser-19). Residue Lys-22 forms a Glycyl lysine isopeptide (Lys-Gly) (interchain with G-Cter in ubiquitin) linkage. 2 positions are modified to phosphoserine: Ser-23 and Ser-25. 3 TPR repeats span residues Ala-26 to Val-59, Ala-60 to Ser-93, and Lys-95 to Gln-127. The segment at Gly-101–Ile-200 is required for interaction with MAPK7. The required for interaction with and ubiquitination of MYOCD stretch occupies residues Ala-142–Gln-196. The interval Lys-143 to Gln-197 is required for interaction with FOXO1. The interval Lys-143–Tyr-303 is required for ubiquitination of FOXO1. Ser-149 carries the post-translational modification Phosphoserine. Glycyl lysine isopeptide (Lys-Gly) (interchain with G-Cter in ubiquitin) cross-links involve residues Lys-221 and Lys-255. A U-box domain is found at Asp-226–Val-300. Position 273 is a phosphoserine (Ser-273).

As to quaternary structure, homodimer. Interacts with BAG2. Interacts with E2 ubiquitin conjugating enzymes UBE2D1, UBE2D2 and UBE2D3. Detected in a ternary complex containing STUB1, HSPA1A and HSPBP1. Part of a complex composed of STUB1/CHIP, VCP/p97, CHRNA3, and UBXN2A that modulates the ubiquitination and endoplasmic reticulum-associated degradation (ERAD) of CHRNA3. Within the complex UBXN2A acts as a scaffold protein required for the interaction of CHRNA3 with VCP/p97, this interaction also inhibits CHRNA3 ubiquitination by STUB1/CHIP and subsequently ERAD. Interacts with MKKS. Interacts with DNAAF4. Interacts (when monoubiquitinated) with ATXN3. Interacts with UBE2W. Interacts (via the U-box domain) with the UBE2V2-UBE2N heterodimer; the complex has a specific 'Lys-63'-linked polyubiquitination activity. Interacts with DNAJB6. Interacts with FLCN. Interacts with HSP90AA1. Interacts with HSP90. Interacts with UBE2N and UBE2V1. Interacts (via TPR repeats) with HSPA8 (via C-terminus). Interacts (via TPR repeats) with HSPA1A (via C-terminus). Interacts with the non-acetylated form of HSPA1A and HSPA1B. Interacts with SMAD3 and HSP90AB1. Interacts with UBE4B. Interacts with PRMT5. Interacts with MYOCD (via C-terminus). Interacts with FOXO1 (when phosphorylated on 'Ser-256'). Interacts with MAPK7/ERK5; the interaction is enhanced in the presence of IGF1 or MAP2K5 and promotes STUB1/CHIP E3 ligase activity. Interacts with and ubiquitinates ESR1; the interaction is promoted in the absence of estradiol (17-beta-estradiol/E2). Interacts with ESR2. Interacts with and ubiquitinates NFATC3; HSPA1A/HSP70 is required as a co-chaperone. In macrophages, interacts with PAQR3; the interaction promotes PPARG poylubiquitination and STUB1-mediated degradation. Component of the chaperone-assisted selective autophagy (CASA) complex consisting of BAG3, HSPA8/HSC70, HSPB8 and STUB1/CHIP. Monoubiquitinated at Lys-2 following cell stress by UBE2W, promoting the interaction with ATXN3. Auto-ubiquitinated; mediated by UBE2D1 and UBE2D2 and enhanced in the presence of MAP2K5. Expressed in differentiated myotubes (at protein level). Highly expressed in skeletal muscle, heart, pancreas, brain and placenta. Detected in kidney, liver and lung.

It is found in the cytoplasm. It localises to the nucleus. The protein resides in the mitochondrion. The catalysed reaction is S-ubiquitinyl-[E2 ubiquitin-conjugating enzyme]-L-cysteine + [acceptor protein]-L-lysine = [E2 ubiquitin-conjugating enzyme]-L-cysteine + N(6)-ubiquitinyl-[acceptor protein]-L-lysine.. It functions in the pathway protein modification; protein ubiquitination. Functionally, E3 ubiquitin-protein ligase which targets misfolded chaperone substrates towards proteasomal degradation. Plays a role in the maintenance of mitochondrial morphology and promotes mitophagic removal of dysfunctional mitochondria; thereby acts as a protector against apoptosis in response to cellular stress. Negatively regulates vascular smooth muscle contraction, via degradation of the transcriptional activator MYOCD and subsequent loss of transcription of genes involved in vascular smooth muscle contraction. Promotes survival and proliferation of cardiac smooth muscle cells via ubiquitination and degradation of FOXO1, resulting in subsequent repression of FOXO1-mediated transcription of pro-apoptotic genes. Ubiquitinates ICER-type isoforms of CREM and targets them for proteasomal degradation, thereby acts as a positive effector of MAPK/ERK-mediated inhibition of apoptosis in cardiomyocytes. Inhibits lipopolysaccharide-induced apoptosis and hypertrophy in cardiomyocytes, via ubiquitination and subsequent proteasomal degradation of NFATC3. Collaborates with ATXN3 in the degradation of misfolded chaperone substrates: ATXN3 restricting the length of ubiquitin chain attached to STUB1/CHIP substrates and preventing further chain extension. Ubiquitinates NOS1 in concert with Hsp70 and Hsp40. Modulates the activity of several chaperone complexes, including Hsp70, Hsc70 and Hsp90. Ubiquitinates CHRNA3 targeting it for endoplasmic reticulum-associated degradation in cortical neurons, as part of the STUB1-VCP-UBXN2A complex. Ubiquitinates and promotes ESR1 proteasomal degradation in response to age-related circulating estradiol (17-beta-estradiol/E2) decline, thereby promotes neuronal apoptosis in response to ischemic reperfusion injury. Mediates transfer of non-canonical short ubiquitin chains to HSPA8 that have no effect on HSPA8 degradation. Mediates polyubiquitination of DNA polymerase beta (POLB) at 'Lys-41', 'Lys-61' and 'Lys-81', thereby playing a role in base-excision repair: catalyzes polyubiquitination by amplifying the HUWE1/ARF-BP1-dependent monoubiquitination and leading to POLB-degradation by the proteasome. Mediates polyubiquitination of CYP3A4. Ubiquitinates EPHA2 and may regulate the receptor stability and activity through proteasomal degradation. Acts as a co-chaperone for HSPA1A and HSPA1B chaperone proteins and promotes ubiquitin-mediated protein degradation. Negatively regulates the suppressive function of regulatory T-cells (Treg) during inflammation by mediating the ubiquitination and degradation of FOXP3 in a HSPA1A/B-dependent manner. Catalyzes monoubiquitination of SIRT6, preventing its degradation by the proteasome. Likely mediates polyubiquitination and down-regulates plasma membrane expression of PD-L1/CD274, an immune inhibitory ligand critical for immune tolerance to self and antitumor immunity. Negatively regulates TGF-beta signaling by modulating the basal level of SMAD3 via ubiquitin-mediated degradation. Plays a role in the degradation of TP53. Mediates ubiquitination of RIPK3 leading to its subsequent proteasome-dependent degradation. May regulate myosin assembly in striated muscles together with UBE4B and VCP/p97 by targeting myosin chaperone UNC45B for proteasomal degradation. Ubiquitinates PPARG in macrophages playing a role in M2 macrophages polarization and angiogenesis. In Homo sapiens (Human), this protein is E3 ubiquitin-protein ligase CHIP.